Consider the following 1294-residue polypeptide: von Willebrand factor A domain-containing protein 3B (1294 aa).

A VWFA domain is found at cysteine 508 to methionine 684. Disordered regions lie at residues cysteine 732–tryptophan 754, arginine 778–arginine 803, alanine 1012–lysine 1036, and aspartate 1193–alanine 1247. Positions aspartate 738–asparagine 748 are enriched in polar residues. Residues arginine 778–serine 787 show a composition bias toward low complexity. A compositionally biased stretch (basic and acidic residues) spans aspartate 1193 to arginine 1202. Residues glutamate 1203–alanine 1212 show a composition bias toward basic residues. The span at lysine 1213–serine 1236 shows a compositional bias: low complexity.

It is found in the cytoplasm. The chain is von Willebrand factor A domain-containing protein 3B (VWA3B) from Homo sapiens (Human).